The chain runs to 88 residues: Small ribosomal subunit protein bS20 (88 aa).

Positions 1 to 28 (MANTVQARKRARQAVKQNEHNSSLRSKL) are disordered.

The protein belongs to the bacterial ribosomal protein bS20 family.

In terms of biological role, binds directly to 16S ribosomal RNA. The sequence is that of Small ribosomal subunit protein bS20 from Polynucleobacter necessarius subsp. necessarius (strain STIR1).